The primary structure comprises 311 residues: Avirulence protein ATR1 (311 aa).

The first 15 residues, Met1–Ala15, serve as a signal peptide directing secretion. A RxLR-dEER motif is present at residues Arg48 to Arg62. 2 WY domain regions span residues Asp127–Val209 and Glu210–Val311.

It belongs to the RxLR effector family. As to quaternary structure, monomer. Interacts with defense protein RPP1 from several ecotypes including RPP1-NdA, RPP1-WsB, RPP1-EstA and RPP1-ZdrA, via their leucine-rich repeats (LLRs).

The protein resides in the secreted. Its subcellular location is the host cytoplasm. Secreted effector that acts as an elicitor of hypersensitive response (HR) specifically on plants carrying both defense protein RPP1 from several ecotypes including RPP1-NdA, RPP1-WsB, RPP1-EstA and RPP1-ZdrA. The protein is Avirulence protein ATR1 of Hyaloperonospora arabidopsidis (strain Emoy2) (Downy mildew agent).